We begin with the raw amino-acid sequence, 398 residues long: 1-deoxy-D-xylulose 5-phosphate reductoisomerase (398 aa).

Thr10, Gly11, Ser12, Ile13, Gly36, Lys37, Asn38, and Asn124 together coordinate NADPH. Lys125 serves as a coordination point for 1-deoxy-D-xylulose 5-phosphate. Position 126 (Glu126) interacts with NADPH. Position 150 (Asp150) interacts with Mn(2+). Positions 151, 152, 186, and 209 each coordinate 1-deoxy-D-xylulose 5-phosphate. Position 152 (Glu152) interacts with Mn(2+). Gly215 provides a ligand contact to NADPH. Residues Ser222, Asn227, Lys228, and Glu231 each contribute to the 1-deoxy-D-xylulose 5-phosphate site. Glu231 lines the Mn(2+) pocket.

This sequence belongs to the DXR family. In terms of assembly, homodimer. It depends on Mg(2+) as a cofactor. Mn(2+) serves as cofactor.

The enzyme catalyses 2-C-methyl-D-erythritol 4-phosphate + NADP(+) = 1-deoxy-D-xylulose 5-phosphate + NADPH + H(+). It participates in isoprenoid biosynthesis; isopentenyl diphosphate biosynthesis via DXP pathway; isopentenyl diphosphate from 1-deoxy-D-xylulose 5-phosphate: step 1/6. Its function is as follows. Catalyzes the NADPH-dependent rearrangement and reduction of 1-deoxy-D-xylulose-5-phosphate (DXP) to 2-C-methyl-D-erythritol 4-phosphate (MEP). The chain is 1-deoxy-D-xylulose 5-phosphate reductoisomerase from Salmonella paratyphi A (strain ATCC 9150 / SARB42).